The following is a 216-amino-acid chain: Ras-related protein RabN1 (216 aa).

15–22 lines the GTP pocket; that stretch reads GDYNSGKT. The short motif at 37–44 is the Effector region element; it reads TCPSTFDL. GTP-binding positions include 62 to 66 and 128 to 131; these read DTAGQ and TKSD. Cys216 carries S-geranylgeranyl cysteine lipidation.

This sequence belongs to the small GTPase superfamily. Rab family.

It is found in the cell membrane. The protein is Ras-related protein RabN1 (rabN1) of Dictyostelium discoideum (Social amoeba).